A 525-amino-acid chain; its full sequence is Membrane-bound lytic murein transglycosylase F (525 aa).

The first 24 residues, 1 to 24 (MQIRHFNRLKRSVLLFASVLLLSA), serve as a signal peptide directing secretion. Residues 25–284 (CQIESQPKSE…SLEEKYIGHI (260 aa)) form a non-LT domain region. An LT domain region spans residues 286–525 (AFDYVDTRAF…VDEDLDQEEE (240 aa)). Residue Glu-329 is part of the active site. The segment at 506–525 (VSGASDITNEVDEDLDQEEE) is disordered. Residues 514–525 (NEVDEDLDQEEE) are compositionally biased toward acidic residues.

This sequence in the N-terminal section; belongs to the bacterial solute-binding protein 3 family. It in the C-terminal section; belongs to the transglycosylase Slt family.

Its subcellular location is the cell outer membrane. The enzyme catalyses Exolytic cleavage of the (1-&gt;4)-beta-glycosidic linkage between N-acetylmuramic acid (MurNAc) and N-acetylglucosamine (GlcNAc) residues in peptidoglycan, from either the reducing or the non-reducing ends of the peptidoglycan chains, with concomitant formation of a 1,6-anhydrobond in the MurNAc residue.. Its function is as follows. Murein-degrading enzyme that degrades murein glycan strands and insoluble, high-molecular weight murein sacculi, with the concomitant formation of a 1,6-anhydromuramoyl product. Lytic transglycosylases (LTs) play an integral role in the metabolism of the peptidoglycan (PG) sacculus. Their lytic action creates space within the PG sacculus to allow for its expansion as well as for the insertion of various structures such as secretion systems and flagella. The polypeptide is Membrane-bound lytic murein transglycosylase F (Vibrio parahaemolyticus serotype O3:K6 (strain RIMD 2210633)).